A 401-amino-acid polypeptide reads, in one-letter code: Na(+)/H(+) antiporter NhaA 2 (401 aa).

A run of 11 helical transmembrane segments spans residues 13-33 (AAGG…ANSP), 59-79 (LLLW…GLEV), 94-114 (ITLP…IYVW), 125-145 (GWAI…TIFG), 154-174 (LFLL…IALF), 178-198 (DLST…FLLN), 209-229 (VLIG…ATLA), 260-280 (WVGF…SLFG), 292-312 (LGIA…VCWI), 332-352 (GVSL…SLAF), and 363-383 (VKAG…VLLA).

The protein belongs to the NhaA Na(+)/H(+) (TC 2.A.33) antiporter family.

The protein localises to the cell inner membrane. The catalysed reaction is Na(+)(in) + 2 H(+)(out) = Na(+)(out) + 2 H(+)(in). In terms of biological role, na(+)/H(+) antiporter that extrudes sodium in exchange for external protons. In Pseudoalteromonas atlantica (strain T6c / ATCC BAA-1087), this protein is Na(+)/H(+) antiporter NhaA 2.